The sequence spans 168 residues: HTH-type transcriptional regulator IscR (168 aa).

An HTH rrf2-type domain is found at 2 to 131 (KLTSKGRYAV…NNITLGELMS (130 aa)). The segment at residues 28 to 51 (LADISERQGISLSYLEQLFSKLRK) is a DNA-binding region (H-T-H motif). The [2Fe-2S] cluster site is built by Cys92, Cys98, and Cys104.

The cofactor is [2Fe-2S] cluster.

In terms of biological role, regulates the transcription of several operons and genes involved in the biogenesis of Fe-S clusters and Fe-S-containing proteins. In Vibrio vulnificus (strain CMCP6), this protein is HTH-type transcriptional regulator IscR.